An 827-amino-acid polypeptide reads, in one-letter code: Multiphosphoryl transfer protein (827 aa).

In terms of domain architecture, PTS EIIA type-2 spans 2-142 (IPLTSELVAI…AVIVARLTGA (141 aa)). The active-site Tele-phosphohistidine intermediate; for EIIA activity is His62. A Phosphohistidine; by HPr modification is found at His62. In terms of domain architecture, HPr spans 157–245 (AQGIDVVVTG…AFEAGLEDEE (89 aa)). His171 acts as the Pros-phosphohistidine intermediate; for HPr activity in catalysis. His171 is subject to Phosphohistidine; by EI. Positions 270-827 (EGRTLVGISS…TTAAEVRGLK (558 aa)) are PTS EI. Catalysis depends on His457, which acts as the Tele-phosphohistidine intermediate; for PTS EI activity. The residue at position 457 (His457) is a Phosphohistidine; by autocatalysis. 2 residues coordinate phosphoenolpyruvate: Arg564 and Arg600. Residues Glu693 and Asp717 each coordinate Mg(2+). Phosphoenolpyruvate contacts are provided by residues 716–717 (ND) and Arg727. The active-site Proton donor is Cys764.

Belongs to the PEP-utilizing enzyme family. Requires Mg(2+) as cofactor.

Its subcellular location is the cytoplasm. It carries out the reaction L-histidyl-[protein] + phosphoenolpyruvate = N(pros)-phospho-L-histidyl-[protein] + pyruvate. The phosphoenolpyruvate-dependent sugar phosphotransferase system (sugar PTS), a major carbohydrate active transport system, catalyzes the phosphorylation of incoming sugar substrates concomitantly with their translocation across the cell membrane. The enzyme II FruAB PTS system is involved in fructose transport. The chain is Multiphosphoryl transfer protein from Rhodobacter capsulatus (Rhodopseudomonas capsulata).